The following is a 170-amino-acid chain: Probable inactive uracil-DNA glycosylase, mitochondrial (170 aa).

The transit peptide at 1–53 directs the protein to the mitochondrion; that stretch reads MALSTPKTLMDFFQPAKRLKASPSSSSSFPAVSVAGRSRDLGSVANSPPRVTV.

This sequence belongs to the uracil-DNA glycosylase (UDG) superfamily. UNG family.

It localises to the mitochondrion. Functionally, probable inactive paralog of AtUNG (AC Q9LIH6) generated by a gene duplication event and subsequently disrupted by at least two transposon insertions. The sequence is that of Probable inactive uracil-DNA glycosylase, mitochondrial from Arabidopsis thaliana (Mouse-ear cress).